A 537-amino-acid chain; its full sequence is Methylmalonate-semialdehyde/malonate-semialdehyde dehydrogenase [acylating], mitochondrial (537 aa).

The N-terminal 34 residues, 1-34, are a transit peptide targeting the mitochondrion; sequence MAAVAVAAAAAALRARILQVSSKVNSSWQPASSF. Residues Lys-49, Lys-54, Lys-57, and Lys-78 each carry the N6-acetyllysine; alternate modification. N6-succinyllysine; alternate occurs at positions 49, 54, 57, and 78. The residue at position 89 (Lys-89) is an N6-acetyllysine. Lys-119 and Lys-131 each carry N6-acetyllysine; alternate. N6-succinyllysine; alternate occurs at positions 119 and 131. NAD(+) is bound by residues Ala-185, Phe-187, Lys-211, Glu-214, Arg-215, and Ser-264. Residue Ser-264 is modified to Phosphoserine. Residue Lys-300 is modified to N6-acetyllysine. The Nucleophile role is filled by Cys-319. 2 positions are modified to N6-acetyllysine: Lys-332 and Lys-333. Residues Lys-366 and Lys-378 each carry the N6-acetyllysine; alternate modification. 2 positions are modified to N6-succinyllysine; alternate: Lys-366 and Lys-378. Phosphoserine is present on Ser-382. Lys-393 carries the post-translational modification N6-succinyllysine. Glu-419 serves as a coordination point for NAD(+). Lys-502 carries the N6-acetyllysine modification. Lys-519 is modified (N6-succinyllysine).

Belongs to the aldehyde dehydrogenase family. In terms of assembly, homodimer. In terms of processing, the N-terminus is blocked.

It localises to the mitochondrion. The enzyme catalyses 2-methyl-3-oxopropanoate + NAD(+) + CoA + H2O = propanoyl-CoA + hydrogencarbonate + NADH + H(+). The catalysed reaction is 3-oxopropanoate + NAD(+) + CoA + H2O = hydrogencarbonate + acetyl-CoA + NADH + H(+). It catalyses the reaction (R)-2-methyl-3-oxopropanoate + NAD(+) + CoA + H2O = propanoyl-CoA + hydrogencarbonate + NADH + H(+). It carries out the reaction (S)-2-methyl-3-oxopropanoate + NAD(+) + CoA + H2O = propanoyl-CoA + hydrogencarbonate + NADH + H(+). Its function is as follows. Malonate and methylmalonate semialdehyde dehydrogenase involved in the catabolism of valine, thymine, and compounds catabolized by way of beta-alanine, including uracil and cytidine. The protein is Methylmalonate-semialdehyde/malonate-semialdehyde dehydrogenase [acylating], mitochondrial (ALDH6A1) of Bos taurus (Bovine).